Here is a 281-residue protein sequence, read N- to C-terminus: Probable endonuclease 4 (281 aa).

The Zn(2+) site is built by H69, H109, E145, D179, H182, H216, D229, H231, and E261.

This sequence belongs to the AP endonuclease 2 family. Zn(2+) serves as cofactor.

It catalyses the reaction Endonucleolytic cleavage to 5'-phosphooligonucleotide end-products.. In terms of biological role, endonuclease IV plays a role in DNA repair. It cleaves phosphodiester bonds at apurinic or apyrimidinic (AP) sites, generating a 3'-hydroxyl group and a 5'-terminal sugar phosphate. The protein is Probable endonuclease 4 of Chlorobaculum parvum (strain DSM 263 / NCIMB 8327) (Chlorobium vibrioforme subsp. thiosulfatophilum).